A 109-amino-acid chain; its full sequence is Large ribosomal subunit protein uL23 (109 aa).

It belongs to the universal ribosomal protein uL23 family. Part of the 50S ribosomal subunit. Contacts protein L29, and trigger factor when it is bound to the ribosome.

In terms of biological role, one of the early assembly proteins it binds 23S rRNA. One of the proteins that surrounds the polypeptide exit tunnel on the outside of the ribosome. Forms the main docking site for trigger factor binding to the ribosome. The sequence is that of Large ribosomal subunit protein uL23 from Haemophilus influenzae (strain PittEE).